Reading from the N-terminus, the 143-residue chain is Large ribosomal subunit protein uL11 (143 aa).

This sequence belongs to the universal ribosomal protein uL11 family. As to quaternary structure, part of the ribosomal stalk of the 50S ribosomal subunit. Interacts with L10 and the large rRNA to form the base of the stalk. L10 forms an elongated spine to which L12 dimers bind in a sequential fashion forming a multimeric L10(L12)X complex. Post-translationally, one or more lysine residues are methylated.

In terms of biological role, forms part of the ribosomal stalk which helps the ribosome interact with GTP-bound translation factors. The chain is Large ribosomal subunit protein uL11 from Cutibacterium acnes (strain DSM 16379 / KPA171202) (Propionibacterium acnes).